Consider the following 212-residue polypeptide: Spore germination lipase LipC (212 aa).

The active-site Nucleophile is serine 11. Substrate is bound by residues glycine 50 and asparagine 82. Catalysis depends on residues aspartate 186 and histidine 189.

It belongs to the 'GDSL' lipolytic enzyme family.

Its subcellular location is the spore coat. Functionally, lipase involved in spore germination. This Bacillus licheniformis (strain ATCC 14580 / DSM 13 / JCM 2505 / CCUG 7422 / NBRC 12200 / NCIMB 9375 / NCTC 10341 / NRRL NRS-1264 / Gibson 46) protein is Spore germination lipase LipC (lipC).